A 296-amino-acid polypeptide reads, in one-letter code: Peroxidase P7 (296 aa).

The residue at position 1 (glutamine 1) is a Pyrrolidone carboxylic acid. 4 disulfides stabilise this stretch: cysteine 11-cysteine 91, cysteine 44-cysteine 49, cysteine 97-cysteine 292, and cysteine 176-cysteine 201. Histidine 42 functions as the Proton acceptor in the catalytic mechanism. 5 residues coordinate Ca(2+): aspartate 43, valine 46, glycine 48, aspartate 50, and serine 52. Residue proline 139 participates in substrate binding. Histidine 169 serves as a coordination point for heme b. Threonine 170 is a Ca(2+) binding site. An N-linked (GlcNAc...) asparagine glycan is attached at asparagine 185. Aspartate 216, serine 219, and aspartate 224 together coordinate Ca(2+).

This sequence belongs to the peroxidase family. Classical plant (class III) peroxidase subfamily. Ca(2+) is required as a cofactor. Requires heme b as cofactor.

The enzyme catalyses 2 a phenolic donor + H2O2 = 2 a phenolic radical donor + 2 H2O. Functionally, removal of H(2)O(2), oxidation of toxic reductants, biosynthesis and degradation of lignin, suberization, auxin catabolism, response to environmental stresses such as wounding, pathogen attack and oxidative stress. These functions might be dependent on each isozyme/isoform in each plant tissue. The sequence is that of Peroxidase P7 from Brassica rapa subsp. rapa (Turnip).